The chain runs to 397 residues: MGASGLVWTLTIVLIAGLMLVDYVLHVRKTHVPTLRQAVIQSATFVGIAILFGIAVVVFGGSELAVEYFACYLTDEALSVDNLFVFLVIISSFGVPRLAQQKVLLFGIAFALVTRTGFIFVGAALIENFNSAFYLFGLVLLVMAGNLARPTGLESRDAETLKRSVIIRLADRFLRTSQDYNGDRLFTVSNNKRMMTPLLLVMIAVGGTDILFAFDSIPALFGLTQNVYLVFAATAFSLLGLRQLYFLIDGLLDRLVYLSYGLAVILGFIGVKLMLEALHDNKIPFINGGKPVPTVEVSTTQSLTVIIIVLLITTAASFWSARGRAQNAMARARRYATAYLDLHYETESAERDKIFTALLAAERQINTLPTKYRMQPGQDDDLMTLLCRAHAARDAHM.

Transmembrane regions (helical) follow at residues 1-21 (MGASGLVWTLTIVLIAGLMLV), 39-59 (VIQSATFVGIAILFGIAVVVF), 76-96 (EALSVDNLFVFLVIISSFGVP), 103-123 (VLLFGIAFALVTRTGFIFVGA), 124-144 (ALIENFNSAFYLFGLVLLVMA), 194-214 (MMTPLLLVMIAVGGTDILFAF), 219-239 (ALFGLTQNVYLVFAATAFSLL), 255-275 (LVYLSYGLAVILGFIGVKLML), and 301-321 (QSLTVIIIVLLITTAASFWSA).

Belongs to the TerC family.

It localises to the cell membrane. This is an uncharacterized protein from Mycobacterium bovis (strain ATCC BAA-935 / AF2122/97).